The sequence spans 163 residues: Putative 4-hydroxy-4-methyl-2-oxoglutarate aldolase (163 aa).

Substrate contacts are provided by residues 76-79 (GDMI) and Arg-98. Asp-99 provides a ligand contact to a divalent metal cation.

It belongs to the class II aldolase/RraA-like family. In terms of assembly, homotrimer. It depends on a divalent metal cation as a cofactor.

The catalysed reaction is 4-hydroxy-4-methyl-2-oxoglutarate = 2 pyruvate. It carries out the reaction oxaloacetate + H(+) = pyruvate + CO2. Catalyzes the aldol cleavage of 4-hydroxy-4-methyl-2-oxoglutarate (HMG) into 2 molecules of pyruvate. Also contains a secondary oxaloacetate (OAA) decarboxylase activity due to the common pyruvate enolate transition state formed following C-C bond cleavage in the retro-aldol and decarboxylation reactions. The sequence is that of Putative 4-hydroxy-4-methyl-2-oxoglutarate aldolase from Pseudomonas fluorescens (strain Pf0-1).